Reading from the N-terminus, the 340-residue chain is NADPH dehydrogenase (340 aa).

23–26 serves as a coordination point for FMN; it reads SPMC. Tyr-28 contributes to the substrate binding site. Positions 60 and 102 each coordinate FMN. 164–167 is a substrate binding site; it reads HGAH. FMN-binding positions include Arg-215 and 307-308; that span reads AR.

This sequence belongs to the NADH:flavin oxidoreductase/NADH oxidase family. NamA subfamily. Homotetramer. Requires FMN as cofactor.

The catalysed reaction is A + NADPH + H(+) = AH2 + NADP(+). Functionally, catalyzes the reduction of the double bond of an array of alpha,beta-unsaturated aldehydes and ketones. It also reduces the nitro group of nitroester and nitroaromatic compounds. It could have a role in detoxification processes. The sequence is that of NADPH dehydrogenase from Geobacillus sp. (strain WCH70).